A 231-amino-acid chain; its full sequence is Quercetin 2,3-dioxygenase (231 aa).

His57, His59, His101, and Glu103 together coordinate a divalent metal cation.

Belongs to the pirin family. Zn(2+) is required as a cofactor. Co(2+) serves as cofactor. Requires Fe(2+) as cofactor.

The enzyme catalyses quercetin + O2 = 2-(3,4-dihydroxybenzoyloxy)-4,6-dihydroxybenzoate + CO. It participates in flavonoid metabolism; quercetin degradation. In terms of biological role, has quercetin 2,3-dioxygenase activity in vitro. Its physiological role is unknown; however, may provide a mechanism that would avoid inhibition of key cellular proteins, such as DNA gyrase, by quercetin. This is Quercetin 2,3-dioxygenase (yhhW) from Escherichia coli O157:H7.